The sequence spans 428 residues: Serine hydroxymethyltransferase (428 aa).

(6S)-5,6,7,8-tetrahydrofolate-binding positions include leucine 117 and 121-123 (GHL). Position 226 is an N6-(pyridoxal phosphate)lysine (lysine 226).

This sequence belongs to the SHMT family. As to quaternary structure, homodimer. Pyridoxal 5'-phosphate is required as a cofactor.

It localises to the cytoplasm. It carries out the reaction (6R)-5,10-methylene-5,6,7,8-tetrahydrofolate + glycine + H2O = (6S)-5,6,7,8-tetrahydrofolate + L-serine. The protein operates within one-carbon metabolism; tetrahydrofolate interconversion. Its pathway is amino-acid biosynthesis; glycine biosynthesis; glycine from L-serine: step 1/1. In terms of biological role, catalyzes the reversible interconversion of serine and glycine with tetrahydrofolate (THF) serving as the one-carbon carrier. This reaction serves as the major source of one-carbon groups required for the biosynthesis of purines, thymidylate, methionine, and other important biomolecules. Also exhibits THF-independent aldolase activity toward beta-hydroxyamino acids, producing glycine and aldehydes, via a retro-aldol mechanism. The polypeptide is Serine hydroxymethyltransferase (Aquifex aeolicus (strain VF5)).